Reading from the N-terminus, the 67-residue chain is UPF0519 protein C (67 aa).

A disordered region spans residues 18–37 (KSQANLNSNSTNSPNNVQGL). The span at 22–33 (NLNSNSTNSPNN) shows a compositional bias: low complexity.

It belongs to the UPF0519 family.

In Dictyostelium discoideum (Social amoeba), this protein is UPF0519 protein C.